The primary structure comprises 441 residues: Matrix extracellular phosphoglycoprotein (441 aa).

A signal peptide spans 1–24 (MTPEGLMKMQAVSVGLLLFSMTWA). Asn82 carries N-linked (GlcNAc...) asparagine glycosylation. The interval 137-441 (QSSPVKSKHT…SGSSSESHGD (305 aa)) is disordered. The segment covering 142 to 156 (KSKHTKHTRQTRRST) has biased composition (basic residues). The tract at residues 178–200 (PDLLVRGDNDVPPFSGDGQHFMH) is dentonin. A Cell attachment site motif is present at residues 183–185 (RGD). Ser192 is a glycosylation site (O-linked (Xyl...) (chondroitin sulfate) serine). The span at 211 to 223 (PESSTSRPLSGSS) shows a compositional bias: polar residues. A compositionally biased stretch (basic and acidic residues) spans 313 to 325 (SREKVKGGVEHAG). 2 stretches are compositionally biased toward polar residues: residues 349-358 (GNQLTLTASQ) and 391-405 (GQNNLTPNKGMSQRR). Residues 424-441 (RDSSESSSSGSSSESHGD) are ASARM motif; interaction with PHEX. Low complexity predominate over residues 428 to 441 (ESSSSGSSSESHGD).

This sequence belongs to the PF07175/osteoregulin family. In terms of assembly, interacts (via ASARM motif) with PHEX; the interaction is zinc-dependent. Post-translationally, phosphorylated on serine residues in the ASARM motif; the phosphorylation is important for the inhibition of bone mineralization. Cleaved by CTSB/cathepsin B; the cleavage is blocked by metalloprotease PHEX. Expressed in osteocytes (at protein level). Expressed by chondrocytes, specifically in the hypertrophic zone of the bone growth plate (at protein level). Expressed in osteoblasts in bone (at protein level). Expressed by osteoblasts within the metaphysis (at protein level). Expressed at low levels in white fat, brown fat, testes, brain and aorta. Expressed in the craniofacial complex (at protein level). Expressed in odontoblasts, ameloblasts and in predentin during tooth development (at protein level). Expressed in the kidney (at protein level). Expressed in osteocytes in mandibular condylar cartilage and tibial cartilage (at protein level). Expressed in salivary glands.

Its subcellular location is the secreted. It localises to the extracellular space. It is found in the extracellular matrix. Functionally, regulates renal phosphate and uric acid excretion. Regulates bone mineralization by osteoblasts and cartilage mineralization by chondrocytes. Regulates the mineralization of the extracellular matrix of the craniofacial complex, such as teeth, bone and cartilage. Increases dental pulp stem cell proliferation. This is Matrix extracellular phosphoglycoprotein from Mus musculus (Mouse).